The sequence spans 79 residues: Acyl carrier protein (79 aa).

One can recognise a Carrier domain in the interval 4–79 (AEIKDKVYDI…QAIDYIVNKK (76 aa)). S39 carries the O-(pantetheine 4'-phosphoryl)serine modification.

This sequence belongs to the acyl carrier protein (ACP) family. In terms of processing, 4'-phosphopantetheine is transferred from CoA to a specific serine of apo-ACP by AcpS. This modification is essential for activity because fatty acids are bound in thioester linkage to the sulfhydryl of the prosthetic group.

It is found in the cytoplasm. It participates in lipid metabolism; fatty acid biosynthesis. In terms of biological role, carrier of the growing fatty acid chain in fatty acid biosynthesis. The chain is Acyl carrier protein from Chlorobaculum parvum (strain DSM 263 / NCIMB 8327) (Chlorobium vibrioforme subsp. thiosulfatophilum).